Reading from the N-terminus, the 338-residue chain is Isopentenyl-diphosphate delta-isomerase (338 aa).

Substrate is bound at residue 13–14 (RK). FMN-binding positions include 72–74 (AMT), serine 102, and asparagine 130. 102–104 (SQR) provides a ligand contact to substrate. Glutamine 165 is a binding site for substrate. Glutamate 166 serves as a coordination point for Mg(2+). FMN contacts are provided by residues lysine 197, threonine 227, 274 to 276 (GIR), and 295 to 296 (AR).

Belongs to the IPP isomerase type 2 family. As to quaternary structure, homooctamer. Dimer of tetramers. FMN is required as a cofactor. It depends on NADPH as a cofactor. Requires Mg(2+) as cofactor.

The protein localises to the cytoplasm. The catalysed reaction is isopentenyl diphosphate = dimethylallyl diphosphate. Its function is as follows. Involved in the biosynthesis of isoprenoids. Catalyzes the 1,3-allylic rearrangement of the homoallylic substrate isopentenyl (IPP) to its allylic isomer, dimethylallyl diphosphate (DMAPP). The polypeptide is Isopentenyl-diphosphate delta-isomerase (Deinococcus radiodurans (strain ATCC 13939 / DSM 20539 / JCM 16871 / CCUG 27074 / LMG 4051 / NBRC 15346 / NCIMB 9279 / VKM B-1422 / R1)).